Reading from the N-terminus, the 120-residue chain is Late cornified envelope-like proline-rich protein 1 (120 aa).

The protein belongs to the cornifin (SPRR) family.

This Mus musculus (Mouse) protein is Late cornified envelope-like proline-rich protein 1 (Lelp1).